The primary structure comprises 31 residues: Delta-actitoxin-Dar1b (31 aa).

Belongs to the sea anemone short toxin (type III) family. In terms of processing, contains 4 disulfide bonds.

Its subcellular location is the secreted. It is found in the nematocyst. Functionally, binds specifically to voltage-gated sodium channels (Nav), thereby delaying their inactivation during signal transduction. In Dofleinia armata (Armed anemone), this protein is Delta-actitoxin-Dar1b.